The sequence spans 124 residues: Small ribosomal subunit protein uS12 (124 aa).

Asp89 is modified (3-methylthioaspartic acid).

This sequence belongs to the universal ribosomal protein uS12 family. As to quaternary structure, part of the 30S ribosomal subunit. Contacts proteins S8 and S17. May interact with IF1 in the 30S initiation complex.

Functionally, with S4 and S5 plays an important role in translational accuracy. Interacts with and stabilizes bases of the 16S rRNA that are involved in tRNA selection in the A site and with the mRNA backbone. Located at the interface of the 30S and 50S subunits, it traverses the body of the 30S subunit contacting proteins on the other side and probably holding the rRNA structure together. The combined cluster of proteins S8, S12 and S17 appears to hold together the shoulder and platform of the 30S subunit. The protein is Small ribosomal subunit protein uS12 of Vibrio campbellii (strain ATCC BAA-1116).